Reading from the N-terminus, the 374-residue chain is WAT1-related protein At2g39510 (374 aa).

Transmembrane regions (helical) follow at residues 9 to 29, 38 to 58, 64 to 84, 99 to 119, 135 to 155, 182 to 202, 212 to 232, 249 to 269, 284 to 304, and 306 to 326; these read FITVVSLQFGYAGLSIIAKFA, VLASYRHIVATIFIAPFAYFL, PKMTLSIFFKILLLGLLEPTI, TFTAAMTNVLPAFAFIMAWIF, ILGTIVTVGGAMLMTVVKGPL, GASLIAIGCICWAGFINLQAI, SLTAYICFLGSIESTIVALFI, LAAVYGGVICSGIGYYVQGVI, LSMVIVAILGSIILAEVMFLG, and ILGAIVIVLGLYSVLWGKSKD. 2 consecutive EamA domains span residues 19 to 147 and 191 to 320; these read YAGL…GAML and ICWA…YSVL. Residues 350 to 374 are disordered; it reads SKANAKMDTNDASVVISRPNTNESV.

The protein belongs to the drug/metabolite transporter (DMT) superfamily. Plant drug/metabolite exporter (P-DME) (TC 2.A.7.4) family.

The protein resides in the membrane. This is WAT1-related protein At2g39510 from Arabidopsis thaliana (Mouse-ear cress).